The primary structure comprises 537 residues: CTP synthase (537 aa).

The interval 1 to 267 (MTNTKFVFVT…ISVLEERLFG (267 aa)) is amidoligase domain. Residue Ser-15 participates in CTP binding. Ser-15 provides a ligand contact to UTP. 16–21 (SVGKGI) is a binding site for ATP. Residue Tyr-56 participates in L-glutamine binding. Asp-73 provides a ligand contact to ATP. Mg(2+) contacts are provided by Asp-73 and Glu-141. Residues 148 to 150 (DIE), 188 to 193 (KTKPTQ), and Lys-224 contribute to the CTP site. Residues 188–193 (KTKPTQ) and Lys-224 contribute to the UTP site. A Glutamine amidotransferase type-1 domain is found at 297–535 (YVVLPDAYLS…LSEAVAKASP (239 aa)). Gly-355 lines the L-glutamine pocket. Catalysis depends on Cys-382, which acts as the Nucleophile; for glutamine hydrolysis. Residues 383 to 386 (LGMQ), Glu-406, and Arg-463 contribute to the L-glutamine site. Active-site residues include His-508 and Glu-510.

This sequence belongs to the CTP synthase family. As to quaternary structure, homotetramer.

It carries out the reaction UTP + L-glutamine + ATP + H2O = CTP + L-glutamate + ADP + phosphate + 2 H(+). The enzyme catalyses L-glutamine + H2O = L-glutamate + NH4(+). It catalyses the reaction UTP + NH4(+) + ATP = CTP + ADP + phosphate + 2 H(+). It participates in pyrimidine metabolism; CTP biosynthesis via de novo pathway; CTP from UDP: step 2/2. With respect to regulation, allosterically activated by GTP, when glutamine is the substrate; GTP has no effect on the reaction when ammonia is the substrate. The allosteric effector GTP functions by stabilizing the protein conformation that binds the tetrahedral intermediate(s) formed during glutamine hydrolysis. Inhibited by the product CTP, via allosteric rather than competitive inhibition. In terms of biological role, catalyzes the ATP-dependent amination of UTP to CTP with either L-glutamine or ammonia as the source of nitrogen. Regulates intracellular CTP levels through interactions with the four ribonucleotide triphosphates. In Coprothermobacter proteolyticus (strain ATCC 35245 / DSM 5265 / OCM 4 / BT), this protein is CTP synthase.